The chain runs to 913 residues: Bifunctional uridylyltransferase/uridylyl-removing enzyme (913 aa).

Residues 1–358 (MFNCDVTAID…PDEERPKKQP (358 aa)) are uridylyltransferase. The tract at residues 359–729 (INARFNQVGD…EHRELALDAV (371 aa)) is uridylyl-removing. The 117-residue stretch at 476–592 (VDAHTLFLIR…TLFADLVGNV (117 aa)) folds into the HD domain. ACT domains are found at residues 730–815 (QVFV…RIPR) and 838–913 (IMSL…NDRV).

Belongs to the GlnD family. It depends on Mg(2+) as a cofactor.

It carries out the reaction [protein-PII]-L-tyrosine + UTP = [protein-PII]-uridylyl-L-tyrosine + diphosphate. The enzyme catalyses [protein-PII]-uridylyl-L-tyrosine + H2O = [protein-PII]-L-tyrosine + UMP + H(+). Its activity is regulated as follows. Uridylyltransferase (UTase) activity is inhibited by glutamine, while glutamine activates uridylyl-removing (UR) activity. In terms of biological role, modifies, by uridylylation and deuridylylation, the PII regulatory proteins (GlnB and homologs), in response to the nitrogen status of the cell that GlnD senses through the glutamine level. Under low glutamine levels, catalyzes the conversion of the PII proteins and UTP to PII-UMP and PPi, while under higher glutamine levels, GlnD hydrolyzes PII-UMP to PII and UMP (deuridylylation). Thus, controls uridylylation state and activity of the PII proteins, and plays an important role in the regulation of nitrogen assimilation and metabolism. This chain is Bifunctional uridylyltransferase/uridylyl-removing enzyme, found in Psychrobacter cryohalolentis (strain ATCC BAA-1226 / DSM 17306 / VKM B-2378 / K5).